We begin with the raw amino-acid sequence, 620 residues long: Cilia- and flagella-associated protein 52 (620 aa).

WD repeat units follow at residues 62–106 (GHGN…LIAR), 109–150 (LHKG…AICG), 156–195 (LNVGNATSVVFSRCRDEMFVTAGNGTIRVWELDLPNRKIW), 288–327 (QLQGGITSITLRGEGHQFFVGTEESHIYRVNFTDFKETLI), 330–369 (CHFEAVQDIVFPFGTAELFATCAKKDIRVWHTMSKRELLR), 372–411 (VPNMTCHGIDFMRDGKSIISAWDDGKIRAFAPESGRLMYT), 415–454 (AHRIGVTAIATTSDCKRIISGGGEGEVRVWQVGCQTQKLE), 459–498 (EHKSSVSCIRVKKNNEECVTASTDGTCIIWDLVRLRRNQM), 500–541 (LANT…RELE), 543–582 (SLSGSINGMDITQEGGHFVTGGHDHLVKVWDYNEGEVTHV), and 585–620 (GHSGNIMAMRISPGNQYIVSVSADGAILRWKYPFAS).

It belongs to the CFAP52 family. Microtubule inner protein component of sperm flagellar doublet microtubules. Interacts with BRCA2. Interacts with the CCT chaperonin complex. Interacts with HSP70. Interacts with AK8. Interacts with CFAP45. Interacts with DNAI1. Interacts with IQDC.

It is found in the cytoplasm. The protein localises to the cytoskeleton. The protein resides in the cilium axoneme. It localises to the flagellum axoneme. Microtubule inner protein (MIP) part of the dynein-decorated doublet microtubules (DMTs) in cilia axoneme. Important for proper ciliary and flagellar beating. May act in cooperation with CFAP45 and axonemal dynein subunit DNAH11. May play a role in cell growth and/or survival. The sequence is that of Cilia- and flagella-associated protein 52 from Mus musculus (Mouse).